A 497-amino-acid polypeptide reads, in one-letter code: Probable D-lactate dehydrogenase, mitochondrial (497 aa).

Positions 65–246 (HRCRPPDVVV…TKATLRLYGV (182 aa)) constitute an FAD-binding PCMH-type domain.

It belongs to the FAD-binding oxidoreductase/transferase type 4 family. FAD is required as a cofactor.

The protein resides in the mitochondrion. It carries out the reaction (R)-lactate + 2 Fe(III)-[cytochrome c] = 2 Fe(II)-[cytochrome c] + pyruvate + 2 H(+). Involved in D-lactate, but not L-lactate catabolic process. The sequence is that of Probable D-lactate dehydrogenase, mitochondrial (ldhd) from Danio rerio (Zebrafish).